Here is a 424-residue protein sequence, read N- to C-terminus: Dihydroorotase (424 aa).

Positions 61 and 63 each coordinate Zn(2+). Substrate-binding positions include 63-65 (HLR) and N95. Zn(2+)-binding residues include D153, H180, and H233. N279 contacts substrate. D306 contacts Zn(2+). D306 is a catalytic residue. H310 serves as a coordination point for substrate.

Belongs to the metallo-dependent hydrolases superfamily. DHOase family. Class I DHOase subfamily. It depends on Zn(2+) as a cofactor.

It carries out the reaction (S)-dihydroorotate + H2O = N-carbamoyl-L-aspartate + H(+). Its pathway is pyrimidine metabolism; UMP biosynthesis via de novo pathway; (S)-dihydroorotate from bicarbonate: step 3/3. Functionally, catalyzes the reversible cyclization of carbamoyl aspartate to dihydroorotate. The protein is Dihydroorotase of Citrifermentans bemidjiense (strain ATCC BAA-1014 / DSM 16622 / JCM 12645 / Bem) (Geobacter bemidjiensis).